The primary structure comprises 269 residues: MASEIKKKLFWRAVVAEFLAMTLFVFISIGSALGFNYPLERNQTLVQDNVKVSLAFGLSIATLAQSVGHISGAHLNPAVTLGLLLSCQISILRAVMYIIAQCVGAIVATAILSGITSSLVDNSLGRNDLAHGVNSGQGLGIEIIGTLQLVLCVLATTDRRRRDLGGSAPLAIGLSVALGHLLAIDYTGCGINPARSFGSAVLTRNFSNHWIFWVGPFIGGALAVLIYDFILAPRSSDFTDRMKVWTSGQVEEYDLDADDINSRVEMKPK.

Over 1-11 (MASEIKKKLFW) the chain is Cytoplasmic. Residues 12–29 (RAVVAEFLAMTLFVFISI) form a helical membrane-spanning segment. Residues 30 to 46 (GSALGFNYPLERNQTLV) lie on the Extracellular side of the membrane. The chain crosses the membrane as a helical span at residues 47 to 65 (QDNVKVSLAFGLSIATLAQ). Residues 66–68 (SVG) are Cytoplasmic-facing. Residues 69–82 (HISGAHLNPAVTLG) lie within the membrane without spanning it. Residues 76 to 78 (NPA) carry the NPA 1 motif. Topologically, residues 83-90 (LLLSCQIS) are cytoplasmic. The helical transmembrane segment at 91–109 (ILRAVMYIIAQCVGAIVAT) threads the bilayer. At 110 to 133 (AILSGITSSLVDNSLGRNDLAHGV) the chain is on the extracellular side. The chain crosses the membrane as a helical span at residues 134-153 (NSGQGLGIEIIGTLQLVLCV). Over 154 to 163 (LATTDRRRRD) the chain is Cytoplasmic. Residues 164-181 (LGGSAPLAIGLSVALGHL) traverse the membrane as a helical segment. At 182–186 (LAIDY) the chain is on the extracellular side. An intramembrane segment occupies 187–199 (TGCGINPARSFGS). The short motif at 192-194 (NPA) is the NPA 2 element. Residues 200 to 206 (AVLTRNF) lie on the Extracellular side of the membrane. An N-linked (GlcNAc...) asparagine glycan is attached at Asn-205. Residues 207 to 224 (SNHWIFWVGPFIGGALAV) form a helical membrane-spanning segment. The Cytoplasmic portion of the chain corresponds to 225 to 269 (LIYDFILAPRSSDFTDRMKVWTSGQVEEYDLDADDINSRVEMKPK). At Ser-247 the chain carries Phosphoserine. Tyr-253 bears the Phosphotyrosine mark. At Ser-262 the chain carries Phosphoserine.

This sequence belongs to the MIP/aquaporin (TC 1.A.8) family. As to quaternary structure, homotetramer; each monomer provides an independent water pore. Component of the ankyrin-1 complex in the erythrocyte, composed of ANK1, RHCE, RHAG, SLC4A1, EPB42, GYPA, GYPB and AQP1. Interacts with EPHB2; involved in endolymph production in the inner ear. Identified in a complex with STOM. Interacts (via the N-terminal) with ANK1 (via ANK 1-5 repeats). Interacts (via the C-terminal) with EPB42. In terms of tissue distribution, detected in erythrocytes (at protein level). In the kidney, expressed on luminal and basal borders of proximal tubules and in the thin limb of Henle's loop (at protein level).

The protein localises to the cell membrane. The enzyme catalyses H2O(in) = H2O(out). It carries out the reaction nitric oxide(out) = nitric oxide(in). The catalysed reaction is CO2(out) = CO2(in). It catalyses the reaction glycerol(in) = glycerol(out). The enzyme catalyses H2O2(out) = H2O2(in). It carries out the reaction K(+)(in) = K(+)(out). The catalysed reaction is Na(+)(in) = Na(+)(out). Functionally, forms a water channel that facilitates the transport of water across cell membranes, playing a crucial role in water homeostasis in various tissues. Could also be permeable to small solutes including hydrogen peroxide, glycerol and gases such as amonnia (NH3), nitric oxide (NO) and carbon dioxide (CO2). Recruited to the ankyrin-1 complex, a multiprotein complex of the erythrocyte membrane, it could be part of a CO2 metabolon, linking facilitated diffusion of CO2 across the membrane, anion exchange of Cl(-)/HCO3(-) and interconversion of dissolved CO2 and carbonic acid in the cytosol. In vitro, it shows non-selective gated cation channel activity and may be permeable to cations like K(+) and Na(+) in vivo. The sequence is that of Aquaporin-1 from Mus musculus (Mouse).